Here is a 311-residue protein sequence, read N- to C-terminus: Pantothenate kinase (311 aa).

93 to 100 serves as a coordination point for ATP; the sequence is GSVAVGKS.

Belongs to the prokaryotic pantothenate kinase family.

It is found in the cytoplasm. The enzyme catalyses (R)-pantothenate + ATP = (R)-4'-phosphopantothenate + ADP + H(+). It functions in the pathway cofactor biosynthesis; coenzyme A biosynthesis; CoA from (R)-pantothenate: step 1/5. The protein is Pantothenate kinase (coaA) of Haemophilus influenzae (strain ATCC 51907 / DSM 11121 / KW20 / Rd).